Consider the following 508-residue polypeptide: Glutamate--cysteine ligase, chloroplastic (508 aa).

The N-terminal 59 residues, 1-59, are a transit peptide targeting the chloroplast; the sequence is MTTIFRLASSSSPSLRHDATPHNFHIRKTSISNTFSFSSKNSLSFKRILTSGGSRRFIV. 2 cysteine pairs are disulfide-bonded: Cys-172–Cys-392 and Cys-335–Cys-350.

This sequence belongs to the carboxylate-amine ligase family. Glutamate--cysteine ligase type 2 subfamily. In terms of assembly, homodimer or monomer when oxidized or reduced, respectively. The Cys-172-Cys-392 disulfide bridge is known to modulate the enzyme activity according to the redox status. The oxidized form constitutes the active enzyme.

It localises to the plastid. Its subcellular location is the chloroplast. The catalysed reaction is L-cysteine + L-glutamate + ATP = gamma-L-glutamyl-L-cysteine + ADP + phosphate + H(+). Its pathway is sulfur metabolism; glutathione biosynthesis; glutathione from L-cysteine and L-glutamate: step 1/2. The sequence is that of Glutamate--cysteine ligase, chloroplastic (GSH1) from Medicago truncatula (Barrel medic).